Consider the following 377-residue polypeptide: Chaperone protein DnaJ (377 aa).

One can recognise a J domain in the interval 5–70 (DFYEVLGVER…SKRAAYDQYG (66 aa)). The CR-type zinc-finger motif lies at 136-214 (GTTVTIRVPT…CHGQGRVEEQ (79 aa)). C149, C152, C166, C169, C188, C191, C202, and C205 together coordinate Zn(2+). 4 CXXCXGXG motif repeats span residues 149 to 156 (CKTCNGSG), 166 to 173 (CTTCGGIG), 188 to 195 (CPRCHGTG), and 202 to 209 (CGSCHGQG).

It belongs to the DnaJ family. In terms of assembly, homodimer. Requires Zn(2+) as cofactor.

The protein resides in the cytoplasm. Participates actively in the response to hyperosmotic and heat shock by preventing the aggregation of stress-denatured proteins and by disaggregating proteins, also in an autonomous, DnaK-independent fashion. Unfolded proteins bind initially to DnaJ; upon interaction with the DnaJ-bound protein, DnaK hydrolyzes its bound ATP, resulting in the formation of a stable complex. GrpE releases ADP from DnaK; ATP binding to DnaK triggers the release of the substrate protein, thus completing the reaction cycle. Several rounds of ATP-dependent interactions between DnaJ, DnaK and GrpE are required for fully efficient folding. Also involved, together with DnaK and GrpE, in the DNA replication of plasmids through activation of initiation proteins. This Pseudomonas aeruginosa (strain LESB58) protein is Chaperone protein DnaJ.